The primary structure comprises 160 residues: Ribosomal RNA large subunit methyltransferase H (160 aa).

S-adenosyl-L-methionine is bound by residues Leu76, Gly108, and 127-132; that span reads LGKLTW.

Belongs to the RNA methyltransferase RlmH family. In terms of assembly, homodimer.

It is found in the cytoplasm. The enzyme catalyses pseudouridine(1915) in 23S rRNA + S-adenosyl-L-methionine = N(3)-methylpseudouridine(1915) in 23S rRNA + S-adenosyl-L-homocysteine + H(+). Its function is as follows. Specifically methylates the pseudouridine at position 1915 (m3Psi1915) in 23S rRNA. This chain is Ribosomal RNA large subunit methyltransferase H, found in Agrobacterium fabrum (strain C58 / ATCC 33970) (Agrobacterium tumefaciens (strain C58)).